We begin with the raw amino-acid sequence, 892 residues long: Translation initiation factor IF-2 (892 aa).

Disordered stretches follow at residues 144 to 176 (QQRL…QKTE) and 189 to 298 (SNSV…SGAH). The span at 207–219 (LPRTVRPTPAARP) shows a compositional bias: low complexity. Residues 391–560 (PRPPVVTIMG…SIQAEVLELK (170 aa)) enclose the tr-type G domain. GTP is bound by residues 400-407 (GHVDHGKT), 446-450 (DTPGH), and 500-503 (SKID).

The protein belongs to the TRAFAC class translation factor GTPase superfamily. Classic translation factor GTPase family. IF-2 subfamily.

The protein localises to the cytoplasm. Its function is as follows. One of the essential components for the initiation of protein synthesis. Protects formylmethionyl-tRNA from spontaneous hydrolysis and promotes its binding to the 30S ribosomal subunits. Also involved in the hydrolysis of GTP during the formation of the 70S ribosomal complex. The sequence is that of Translation initiation factor IF-2 from Xylella fastidiosa (strain M12).